Consider the following 62-residue polypeptide: Small ribosomal subunit protein uS14 (62 aa).

Cys-25, Cys-28, Cys-41, and Cys-44 together coordinate Zn(2+).

It belongs to the universal ribosomal protein uS14 family. Zinc-binding uS14 subfamily. As to quaternary structure, part of the 30S ribosomal subunit. Contacts proteins S3 and S10. Zn(2+) serves as cofactor.

Binds 16S rRNA, required for the assembly of 30S particles and may also be responsible for determining the conformation of the 16S rRNA at the A site. This is Small ribosomal subunit protein uS14 from Persephonella marina (strain DSM 14350 / EX-H1).